Here is a 639-residue protein sequence, read N- to C-terminus: Threonine--tRNA ligase (639 aa).

The TGS domain maps to 1–61; the sequence is MINITLKDGK…KEDSELEILT (61 aa). Residues 242 to 532 form a catalytic region; the sequence is DHRKLGKELD…LIEHFAGAFP (291 aa). Cysteine 333, histidine 384, and histidine 509 together coordinate Zn(2+).

It belongs to the class-II aminoacyl-tRNA synthetase family. Homodimer. It depends on Zn(2+) as a cofactor.

It localises to the cytoplasm. The enzyme catalyses tRNA(Thr) + L-threonine + ATP = L-threonyl-tRNA(Thr) + AMP + diphosphate + H(+). Its function is as follows. Catalyzes the attachment of threonine to tRNA(Thr) in a two-step reaction: L-threonine is first activated by ATP to form Thr-AMP and then transferred to the acceptor end of tRNA(Thr). Also edits incorrectly charged L-seryl-tRNA(Thr). The sequence is that of Threonine--tRNA ligase from Clostridium tetani (strain Massachusetts / E88).